The sequence spans 454 residues: UPF0210 protein Mhun_2657 (454 aa).

It belongs to the UPF0210 family.

The chain is UPF0210 protein Mhun_2657 from Methanospirillum hungatei JF-1 (strain ATCC 27890 / DSM 864 / NBRC 100397 / JF-1).